The sequence spans 461 residues: Coronin-1A (461 aa).

Position 2 is an N-acetylserine (S2). S2 carries the post-translational modification Phosphoserine; by PKC. 7 WD repeats span residues 13 to 63, 73 to 110, 123 to 160, 164 to 204, 207 to 251, 258 to 296, and 302 to 349; these read HVFG…LVLP, NVPMVCGHTAPVLDIAWCPHNDNVIASGSEDCSVMVWE, PVVTLEGHTKRVGIVAWHPTAQNVLLSAGCDNVILVWD, GVAV…RIIE, KGTI…ALWD, PLSLQELDTSSGVLLPFFDPDTNIVYLCGKGDSSIRYFE, and PFLH…EPIA. Over residues 404–418 the composition is skewed to basic and acidic residues; that stretch reads LRVNRGLDTGRKRTT. The disordered stretch occupies residues 404–429; sequence LRVNRGLDTGRKRTTPEASGAPSSDA. T412 is subject to Phosphothreonine; by PKC. Position 418 is a phosphothreonine (T418). S422 is subject to Phosphoserine. The stretch at 424–460 forms a coiled coil; that stretch reads APSSDAISRLEEEMRKLQATVQELQKRLDRLEETVQA. K449 carries the N6-acetyllysine modification.

The protein belongs to the WD repeat coronin family. Binds actin. Post-translationally, phosphorylation at Thr-412 by PKC strongly down-regulates the association with actin. Polyubiquitinated by RNF128 with 'Lys-48'-linked chains, leading to proteasomal degradation. In terms of tissue distribution, expressed in brain, thymus, spleen, bone marrow and lymph node. Low in lung and gut.

The protein resides in the cytoplasm. It is found in the cytoskeleton. The protein localises to the cell cortex. Its subcellular location is the cytoplasmic vesicle. It localises to the phagosome membrane. Its function is as follows. May be a crucial component of the cytoskeleton of highly motile cells, functioning both in the invagination of large pieces of plasma membrane, as well as in forming protrusions of the plasma membrane involved in cell locomotion. In mycobacteria-infected macrophages, its retention on the phagosomal membrane prevents fusion between phagosomes and lysosomes. This Bos taurus (Bovine) protein is Coronin-1A (CORO1A).